The chain runs to 105 residues: uncharacterized protein (105 aa).

This is an uncharacterized protein from Fowlpox virus (strain NVSL) (FPV).